The chain runs to 824 residues: Probable acyl-CoA dehydrogenase IBR3 (824 aa).

Gly2 is subject to N-acetylglycine. FAD is bound by residues 555–565 (FAMTEPQVASS), 589–591 (WTS), Arg706, Gln776, and 776–780 (QVHGA). The Microbody targeting signal motif lies at 822 to 824 (SKL).

This sequence belongs to the acyl-CoA dehydrogenase family. FAD serves as cofactor.

It localises to the peroxisome. It carries out the reaction a 2,3-saturated acyl-CoA + A = a 2,3-dehydroacyl-CoA + AH2. Involved with IBR1 and IBR10 in the peroxisomal beta-oxidation of indole-3-butyric acid (IBA) to form indole-3-acetic acid (IAA), a biologically active auxin. May be responsible for catalyzing the first step in IBA-CoA beta-oxidation. May play a role in defense response to pathogenic bacteria. In Arabidopsis thaliana (Mouse-ear cress), this protein is Probable acyl-CoA dehydrogenase IBR3.